We begin with the raw amino-acid sequence, 303 residues long: Proteasome subunit beta (303 aa).

A propeptide spans 1–64 (MTWPDRDTSA…VTPSDAVPHG (64 aa)) (removed in mature form; by autocatalysis). Thr-65 acts as the Nucleophile in catalysis.

It belongs to the peptidase T1B family. As to quaternary structure, the 20S proteasome core is composed of 14 alpha and 14 beta subunits that assemble into four stacked heptameric rings, resulting in a barrel-shaped structure. The two inner rings, each composed of seven catalytic beta subunits, are sandwiched by two outer rings, each composed of seven alpha subunits. The catalytic chamber with the active sites is on the inside of the barrel. Has a gated structure, the ends of the cylinder being occluded by the N-termini of the alpha-subunits. Is capped by the proteasome-associated ATPase, ARC.

It localises to the cytoplasm. It carries out the reaction Cleavage of peptide bonds with very broad specificity.. Its pathway is protein degradation; proteasomal Pup-dependent pathway. The formation of the proteasomal ATPase ARC-20S proteasome complex, likely via the docking of the C-termini of ARC into the intersubunit pockets in the alpha-rings, may trigger opening of the gate for substrate entry. Interconversion between the open-gate and close-gate conformations leads to a dynamic regulation of the 20S proteasome proteolysis activity. Its function is as follows. Component of the proteasome core, a large protease complex with broad specificity involved in protein degradation. The protein is Proteasome subunit beta of Mycolicibacterium gilvum (strain PYR-GCK) (Mycobacterium gilvum (strain PYR-GCK)).